The chain runs to 241 residues: Ubiquinone biosynthesis O-methyltransferase (241 aa).

S-adenosyl-L-methionine contacts are provided by Arg46, Gly66, Asp87, and Met131.

This sequence belongs to the methyltransferase superfamily. UbiG/COQ3 family.

It catalyses the reaction a 3-demethylubiquinol + S-adenosyl-L-methionine = a ubiquinol + S-adenosyl-L-homocysteine + H(+). The enzyme catalyses a 3-(all-trans-polyprenyl)benzene-1,2-diol + S-adenosyl-L-methionine = a 2-methoxy-6-(all-trans-polyprenyl)phenol + S-adenosyl-L-homocysteine + H(+). It functions in the pathway cofactor biosynthesis; ubiquinone biosynthesis. Its function is as follows. O-methyltransferase that catalyzes the 2 O-methylation steps in the ubiquinone biosynthetic pathway. The chain is Ubiquinone biosynthesis O-methyltransferase from Bordetella bronchiseptica (strain ATCC BAA-588 / NCTC 13252 / RB50) (Alcaligenes bronchisepticus).